Consider the following 674-residue polypeptide: UvrABC system protein C (674 aa).

Positions 64-142 constitute a GIY-YIG domain; it reads NGPGVYRMLN…IKRLRPRFNV (79 aa). Residues 252 to 287 form the UVR domain; the sequence is QAVKATIASAMAEASENLDFERAALYRDRLAALSHV.

It belongs to the UvrC family. In terms of assembly, interacts with UvrB in an incision complex.

It localises to the cytoplasm. Functionally, the UvrABC repair system catalyzes the recognition and processing of DNA lesions. UvrC both incises the 5' and 3' sides of the lesion. The N-terminal half is responsible for the 3' incision and the C-terminal half is responsible for the 5' incision. The protein is UvrABC system protein C of Rhizobium meliloti (strain 1021) (Ensifer meliloti).